A 419-amino-acid chain; its full sequence is L-rhamnose isomerase (419 aa).

Residues His-262, Asp-294, and Asp-296 each coordinate Mn(2+).

It belongs to the rhamnose isomerase family. Homotetramer. The cofactor is Mn(2+).

The protein resides in the cytoplasm. It catalyses the reaction L-rhamnopyranose = L-rhamnulose. Its pathway is carbohydrate degradation; L-rhamnose degradation; glycerone phosphate from L-rhamnose: step 1/3. Functionally, catalyzes the interconversion of L-rhamnose and L-rhamnulose. In Escherichia coli O139:H28 (strain E24377A / ETEC), this protein is L-rhamnose isomerase.